Reading from the N-terminus, the 370-residue chain is Chaperone protein DnaJ (370 aa).

The J domain occupies 5-69 (DYYEVLGVDR…QKKAHYDQFG (65 aa)). The CR-type zinc-finger motif lies at 128 to 210 (GKETTIEIPR…CGGKGKVRKR (83 aa)). The Zn(2+) site is built by C141, C144, C158, C161, C184, C187, C198, and C201. CXXCXGXG motif repeat units lie at residues 141–148 (CHTCSGSG), 158–165 (CPHCGGSG), 184–191 (CHHCEGTG), and 198–205 (CATCGGKG).

The protein belongs to the DnaJ family. As to quaternary structure, homodimer. Zn(2+) serves as cofactor.

It localises to the cytoplasm. In terms of biological role, participates actively in the response to hyperosmotic and heat shock by preventing the aggregation of stress-denatured proteins and by disaggregating proteins, also in an autonomous, DnaK-independent fashion. Unfolded proteins bind initially to DnaJ; upon interaction with the DnaJ-bound protein, DnaK hydrolyzes its bound ATP, resulting in the formation of a stable complex. GrpE releases ADP from DnaK; ATP binding to DnaK triggers the release of the substrate protein, thus completing the reaction cycle. Several rounds of ATP-dependent interactions between DnaJ, DnaK and GrpE are required for fully efficient folding. Also involved, together with DnaK and GrpE, in the DNA replication of plasmids through activation of initiation proteins. This Halalkalibacterium halodurans (strain ATCC BAA-125 / DSM 18197 / FERM 7344 / JCM 9153 / C-125) (Bacillus halodurans) protein is Chaperone protein DnaJ.